The sequence spans 165 residues: Protein NKG7 (165 aa).

4 helical membrane passes run 9–29 (LFAG…DFWI), 61–81 (FCIL…LSCI), 92–112 (LVST…MAVY), and 133–153 (FYLG…SLGA).

Belongs to the PMP-22/EMP/MP20 family. In terms of tissue distribution, predominantly expressed by leukocytes with cytotoxic activity such as CD8(+) T-cells and natural killer cells.

The protein resides in the cell membrane. The protein localises to the cytolytic granule membrane. Its function is as follows. Regulates cytotoxic granule exocytosis in effector lymphocytes, thus acting as a critical mediator of inflammation in a broad range of infectious and non-infectious diseases. Essential for cytotoxic degranulation of natural killer (NK) cells and CD8(+) T-cells and for the activation of CD4(+) T-cells following infection. Plays a critical role in CD8(+) T-cell and NK cell-mediated cytolysis of target cells and contributes to the cytolytic activity via the perforin/granzyme pathway by enhancing exocytosis of LAMP1-carrying lytic granules. Contributes to NK cell-mediated control of cancer metastasis. The polypeptide is Protein NKG7 (Nkg7) (Mus musculus (Mouse)).